The primary structure comprises 213 residues: Small ribosomal subunit protein uS4 (213 aa).

The disordered stretch occupies residues 16 to 53 (GTDLGLKSGVKPYDVKTKKSARPPGQHGVSRNKSSEYS). A compositionally biased stretch (polar residues) spans 44 to 53 (VSRNKSSEYS). Positions 97 to 163 (SRLDNVVYRM…EKSREQLRIK (67 aa)) constitute an S4 RNA-binding domain.

It belongs to the universal ribosomal protein uS4 family. Part of the 30S ribosomal subunit. Contacts protein S5. The interaction surface between S4 and S5 is involved in control of translational fidelity.

Functionally, one of the primary rRNA binding proteins, it binds directly to 16S rRNA where it nucleates assembly of the body of the 30S subunit. Its function is as follows. With S5 and S12 plays an important role in translational accuracy. This is Small ribosomal subunit protein uS4 from Psychrobacter arcticus (strain DSM 17307 / VKM B-2377 / 273-4).